A 151-amino-acid chain; its full sequence is 18 kDa heat shock protein (151 aa).

Positions 38–151 (TFNGNAGFKV…KDNGRRIDIH (114 aa)) constitute a sHSP domain.

This sequence belongs to the small heat shock protein (HSP20) family.

Its function is as follows. Probable chaperone. This Clostridium acetobutylicum (strain ATCC 824 / DSM 792 / JCM 1419 / IAM 19013 / LMG 5710 / NBRC 13948 / NRRL B-527 / VKM B-1787 / 2291 / W) protein is 18 kDa heat shock protein (hsp18).